Consider the following 131-residue polypeptide: Large ribosomal subunit protein bL19 (131 aa).

The interval 110 to 131 (KSARIAERTDDRAKKAKATAAE) is disordered. The span at 113–122 (RIAERTDDRA) shows a compositional bias: basic and acidic residues.

The protein belongs to the bacterial ribosomal protein bL19 family.

In terms of biological role, this protein is located at the 30S-50S ribosomal subunit interface and may play a role in the structure and function of the aminoacyl-tRNA binding site. The chain is Large ribosomal subunit protein bL19 from Azorhizobium caulinodans (strain ATCC 43989 / DSM 5975 / JCM 20966 / LMG 6465 / NBRC 14845 / NCIMB 13405 / ORS 571).